The primary structure comprises 419 residues: UDP-N-acetylglucosamine 1-carboxyvinyltransferase (419 aa).

Residue 22-23 (KN) participates in phosphoenolpyruvate binding. R93 lines the UDP-N-acetyl-alpha-D-glucosamine pocket. C117 (proton donor) is an active-site residue. Position 117 is a 2-(S-cysteinyl)pyruvic acid O-phosphothioketal (C117). 2 residues coordinate UDP-N-acetyl-alpha-D-glucosamine: D307 and I329.

Belongs to the EPSP synthase family. MurA subfamily.

Its subcellular location is the cytoplasm. The enzyme catalyses phosphoenolpyruvate + UDP-N-acetyl-alpha-D-glucosamine = UDP-N-acetyl-3-O-(1-carboxyvinyl)-alpha-D-glucosamine + phosphate. It participates in cell wall biogenesis; peptidoglycan biosynthesis. Functionally, cell wall formation. Adds enolpyruvyl to UDP-N-acetylglucosamine. This chain is UDP-N-acetylglucosamine 1-carboxyvinyltransferase, found in Shewanella denitrificans (strain OS217 / ATCC BAA-1090 / DSM 15013).